Here is a 176-residue protein sequence, read N- to C-terminus: Sperm-egg fusion protein TMEM95 (176 aa).

A signal peptide spans 1–16 (MWVLALGGAFLAVAKA). Cystine bridges form between Cys-17/Cys-119, Cys-20/Cys-122, Cys-106/Cys-129, and Cys-110/Cys-135. Over 17 to 146 (CIFCRLQDHA…PDSHDLWDAR (130 aa)) the chain is Extracellular. N-linked (GlcNAc...) asparagine glycans are attached at residues Asn-36 and Asn-118. Residues 147–167 (ILLLCIFGIVLLSGVVSLQVE) form a helical membrane-spanning segment. Over 168-176 (YLNLQAKDL) the chain is Cytoplasmic.

Belongs to the TMEM95 family. Does not interact with sperm-egg fusion proteins IZUMO1 or IZUMO1R/JUNO. N-glycosylated. As to expression, expressed exclusively in testis.

The protein resides in the cytoplasmic vesicle. It localises to the secretory vesicle. It is found in the acrosome membrane. In terms of biological role, sperm protein required for fusion of sperm with the egg membrane during fertilization. The sequence is that of Sperm-egg fusion protein TMEM95 from Mus musculus (Mouse).